We begin with the raw amino-acid sequence, 923 residues long: Alanine--tRNA ligase (923 aa).

Positions 611, 615, 714, and 718 each coordinate Zn(2+).

Belongs to the class-II aminoacyl-tRNA synthetase family. Zn(2+) serves as cofactor.

Its subcellular location is the cytoplasm. The catalysed reaction is tRNA(Ala) + L-alanine + ATP = L-alanyl-tRNA(Ala) + AMP + diphosphate. Catalyzes the attachment of alanine to tRNA(Ala) in a two-step reaction: alanine is first activated by ATP to form Ala-AMP and then transferred to the acceptor end of tRNA(Ala). Also edits incorrectly charged Ser-tRNA(Ala) and Gly-tRNA(Ala) via its editing domain. The protein is Alanine--tRNA ligase of Methanosarcina barkeri (strain Fusaro / DSM 804).